The primary structure comprises 214 residues: Charged multivesicular body protein 2b-B (214 aa).

Residues 25–55 (QRAITRDRAALEKQEKQLEMEIKKMAKTGNK) adopt a coiled-coil conformation. Residues 178–200 (MAKAPSAAKGLPSTSAAKSKGIS) form a disordered region. The MIT-interacting motif motif lies at 202-212 (EEIERQLKALG).

This sequence belongs to the SNF7 family. Probable core component of the endosomal sorting required for transport complex III (ESCRT-III). ESCRT-III components are thought to multimerize to form a flat lattice on the perimeter membrane of the endosome.

It is found in the cytoplasm. The protein resides in the cytosol. It localises to the late endosome membrane. In terms of biological role, probable core component of the endosomal sorting required for transport complex III (ESCRT-III) which is involved in multivesicular bodies (MVBs) formation and sorting of endosomal cargo proteins into MVBs. MVBs contain intraluminal vesicles (ILVs) that are generated by invagination and scission from the limiting membrane of the endosome and mostly are delivered to lysosomes enabling degradation of membrane proteins, such as stimulated growth factor receptors, lysosomal enzymes and lipids. This is Charged multivesicular body protein 2b-B (chmp2b-b) from Xenopus laevis (African clawed frog).